The sequence spans 262 residues: Type III pantothenate kinase (262 aa).

12 to 19 is a binding site for ATP; it reads DIGNTSIA. Substrate contacts are provided by residues Y94 and 109–112; that span reads GSDV. D111 serves as the catalytic Proton acceptor. A K(+)-binding site is contributed by D132. An ATP-binding site is contributed by T135. A substrate-binding site is contributed by T187.

It belongs to the type III pantothenate kinase family. In terms of assembly, homodimer. NH4(+) is required as a cofactor. It depends on K(+) as a cofactor.

It is found in the cytoplasm. The enzyme catalyses (R)-pantothenate + ATP = (R)-4'-phosphopantothenate + ADP + H(+). It functions in the pathway cofactor biosynthesis; coenzyme A biosynthesis; CoA from (R)-pantothenate: step 1/5. Functionally, catalyzes the phosphorylation of pantothenate (Pan), the first step in CoA biosynthesis. The chain is Type III pantothenate kinase from Borreliella burgdorferi (strain ATCC 35210 / DSM 4680 / CIP 102532 / B31) (Borrelia burgdorferi).